We begin with the raw amino-acid sequence, 307 residues long: tRNA-cytidine(32) 2-sulfurtransferase (307 aa).

The PP-loop motif signature appears at 44-49; sequence SGGKDS. Positions 119, 122, and 210 each coordinate [4Fe-4S] cluster.

Belongs to the TtcA family. As to quaternary structure, homodimer. Requires Mg(2+) as cofactor. [4Fe-4S] cluster serves as cofactor.

The protein resides in the cytoplasm. The catalysed reaction is cytidine(32) in tRNA + S-sulfanyl-L-cysteinyl-[cysteine desulfurase] + AH2 + ATP = 2-thiocytidine(32) in tRNA + L-cysteinyl-[cysteine desulfurase] + A + AMP + diphosphate + H(+). Its pathway is tRNA modification. Its function is as follows. Catalyzes the ATP-dependent 2-thiolation of cytidine in position 32 of tRNA, to form 2-thiocytidine (s(2)C32). The sulfur atoms are provided by the cysteine/cysteine desulfurase (IscS) system. This Aliivibrio salmonicida (strain LFI1238) (Vibrio salmonicida (strain LFI1238)) protein is tRNA-cytidine(32) 2-sulfurtransferase.